Reading from the N-terminus, the 238-residue chain is Urease accessory protein UreF (238 aa).

It belongs to the UreF family. In terms of assembly, ureD, UreF and UreG form a complex that acts as a GTP-hydrolysis-dependent molecular chaperone, activating the urease apoprotein by helping to assemble the nickel containing metallocenter of UreC. The UreE protein probably delivers the nickel.

The protein resides in the cytoplasm. In terms of biological role, required for maturation of urease via the functional incorporation of the urease nickel metallocenter. This chain is Urease accessory protein UreF, found in Rhodopseudomonas palustris (strain BisA53).